A 401-amino-acid polypeptide reads, in one-letter code: Exodeoxyribonuclease 7 large subunit (401 aa).

It belongs to the XseA family. In terms of assembly, heterooligomer composed of large and small subunits.

The protein resides in the cytoplasm. The enzyme catalyses Exonucleolytic cleavage in either 5'- to 3'- or 3'- to 5'-direction to yield nucleoside 5'-phosphates.. Bidirectionally degrades single-stranded DNA into large acid-insoluble oligonucleotides, which are then degraded further into small acid-soluble oligonucleotides. In Lachnoclostridium phytofermentans (strain ATCC 700394 / DSM 18823 / ISDg) (Clostridium phytofermentans), this protein is Exodeoxyribonuclease 7 large subunit.